The sequence spans 592 residues: Aspartate--tRNA(Asp/Asn) ligase (592 aa).

Glu175 contributes to the L-aspartate binding site. An aspartate region spans residues 199 to 202; sequence QLFK. Residue Arg221 coordinates L-aspartate. ATP is bound by residues 221 to 223 and Gln230; that span reads RDE. Residue His450 participates in L-aspartate binding. Glu483 provides a ligand contact to ATP. Arg490 is a binding site for L-aspartate. Residue 535-538 participates in ATP binding; that stretch reads GLDR.

This sequence belongs to the class-II aminoacyl-tRNA synthetase family. Type 1 subfamily. Homodimer.

Its subcellular location is the cytoplasm. It catalyses the reaction tRNA(Asx) + L-aspartate + ATP = L-aspartyl-tRNA(Asx) + AMP + diphosphate. In terms of biological role, aspartyl-tRNA synthetase with relaxed tRNA specificity since it is able to aspartylate not only its cognate tRNA(Asp) but also tRNA(Asn). Reaction proceeds in two steps: L-aspartate is first activated by ATP to form Asp-AMP and then transferred to the acceptor end of tRNA(Asp/Asn). This is Aspartate--tRNA(Asp/Asn) ligase from Acinetobacter baumannii (strain ATCC 17978 / DSM 105126 / CIP 53.77 / LMG 1025 / NCDC KC755 / 5377).